The following is a 284-amino-acid chain: NADPH-dependent 7-cyano-7-deazaguanine reductase (284 aa).

91-93 (IES) contacts substrate. Residue 93-94 (SK) coordinates NADPH. The active-site Thioimide intermediate is Cys192. Asp199 (proton donor) is an active-site residue. 231 to 232 (HE) contacts substrate. 260–261 (RG) contacts NADPH.

It belongs to the GTP cyclohydrolase I family. QueF type 2 subfamily. As to quaternary structure, homodimer.

The protein localises to the cytoplasm. It catalyses the reaction 7-aminomethyl-7-carbaguanine + 2 NADP(+) = 7-cyano-7-deazaguanine + 2 NADPH + 3 H(+). It participates in tRNA modification; tRNA-queuosine biosynthesis. Functionally, catalyzes the NADPH-dependent reduction of 7-cyano-7-deazaguanine (preQ0) to 7-aminomethyl-7-deazaguanine (preQ1). The polypeptide is NADPH-dependent 7-cyano-7-deazaguanine reductase (Shewanella denitrificans (strain OS217 / ATCC BAA-1090 / DSM 15013)).